A 92-amino-acid chain; its full sequence is Probable Fe(2+)-trafficking protein (92 aa).

It belongs to the Fe(2+)-trafficking protein family.

In terms of biological role, could be a mediator in iron transactions between iron acquisition and iron-requiring processes, such as synthesis and/or repair of Fe-S clusters in biosynthetic enzymes. The protein is Probable Fe(2+)-trafficking protein of Shewanella sp. (strain W3-18-1).